A 285-amino-acid chain; its full sequence is Probable endonuclease 4 (285 aa).

Zn(2+)-binding residues include His69, His109, Glu145, Asp179, His182, His216, Asp229, His231, and Glu261.

The protein belongs to the AP endonuclease 2 family. It depends on Zn(2+) as a cofactor.

It carries out the reaction Endonucleolytic cleavage to 5'-phosphooligonucleotide end-products.. In terms of biological role, endonuclease IV plays a role in DNA repair. It cleaves phosphodiester bonds at apurinic or apyrimidinic (AP) sites, generating a 3'-hydroxyl group and a 5'-terminal sugar phosphate. In Enterobacter sp. (strain 638), this protein is Probable endonuclease 4.